Here is a 316-residue protein sequence, read N- to C-terminus: Protoheme IX farnesyltransferase (316 aa).

Transmembrane regions (helical) follow at residues 32–52 (VMSL…GQIN), 53–73 (PVLG…SGAL), 93–113 (IPAG…LSCF), 116–136 (AILG…TIFF), 152–172 (NIVI…ACVT), 180–200 (TVLF…LALF), 226–246 (IVAY…LGFA), 248–268 (FAYG…SIAV), and 289–309 (IFYL…AMLV).

It belongs to the UbiA prenyltransferase family. Protoheme IX farnesyltransferase subfamily.

It is found in the cell inner membrane. The catalysed reaction is heme b + (2E,6E)-farnesyl diphosphate + H2O = Fe(II)-heme o + diphosphate. It functions in the pathway porphyrin-containing compound metabolism; heme O biosynthesis; heme O from protoheme: step 1/1. Functionally, converts heme B (protoheme IX) to heme O by substitution of the vinyl group on carbon 2 of heme B porphyrin ring with a hydroxyethyl farnesyl side group. The chain is Protoheme IX farnesyltransferase from Rhizobium etli (strain CIAT 652).